Consider the following 943-residue polypeptide: TBC1 domain family member 2B (943 aa).

A disordered region spans residues 1–29; sequence MPGVEDPCDSQGTPPEEPSTSVAPGEAAK. Residues 10–22 show a composition bias toward polar residues; that stretch reads SQGTPPEEPSTSV. One can recognise a PH domain in the interval 32–129; it reads SPRLCGYLAK…WLQELQQKRW (98 aa). Positions 315-514 form a coiled coil; sequence RMESDVLLKL…ARYSNLEAKM (200 aa). In terms of domain architecture, Rab-GAP TBC spans 642–836; sequence GIPHEHRSRM…RIWDSLLYEG (195 aa).

The protein resides in the early endosome. GTPase-activating protein that plays a role in the early steps of endocytosis. The polypeptide is TBC1 domain family member 2B (tbc1d2b) (Xenopus tropicalis (Western clawed frog)).